Consider the following 237-residue polypeptide: 2,3,4,5-tetrahydropyridine-2,6-dicarboxylate N-acetyltransferase (237 aa).

It belongs to the transferase hexapeptide repeat family. DapH subfamily.

It carries out the reaction (S)-2,3,4,5-tetrahydrodipicolinate + acetyl-CoA + H2O = L-2-acetamido-6-oxoheptanedioate + CoA. Its pathway is amino-acid biosynthesis; L-lysine biosynthesis via DAP pathway; LL-2,6-diaminopimelate from (S)-tetrahydrodipicolinate (acetylase route): step 1/3. Catalyzes the transfer of an acetyl group from acetyl-CoA to tetrahydrodipicolinate. This chain is 2,3,4,5-tetrahydropyridine-2,6-dicarboxylate N-acetyltransferase, found in Alkaliphilus metalliredigens (strain QYMF).